Here is a 90-residue protein sequence, read N- to C-terminus: Sec-independent protein translocase protein TatA (90 aa).

Residues methionine 1 to glycine 21 traverse the membrane as a helical segment. Residues glycine 42 to glycine 90 are disordered.

The protein belongs to the TatA/E family. As to quaternary structure, the Tat system comprises two distinct complexes: a TatABC complex, containing multiple copies of TatA, TatB and TatC subunits, and a separate TatA complex, containing only TatA subunits. Substrates initially bind to the TatABC complex, which probably triggers association of the separate TatA complex to form the active translocon.

The protein resides in the cell inner membrane. Its function is as follows. Part of the twin-arginine translocation (Tat) system that transports large folded proteins containing a characteristic twin-arginine motif in their signal peptide across membranes. TatA could form the protein-conducting channel of the Tat system. In Methylobacterium nodulans (strain LMG 21967 / CNCM I-2342 / ORS 2060), this protein is Sec-independent protein translocase protein TatA.